A 334-amino-acid polypeptide reads, in one-letter code: Aspartate carbamoyltransferase catalytic subunit (334 aa).

2 residues coordinate carbamoyl phosphate: R70 and T71. Residue K98 participates in L-aspartate binding. 3 residues coordinate carbamoyl phosphate: R120, H150, and Q153. R183 and R239 together coordinate L-aspartate. Residues G280 and P281 each contribute to the carbamoyl phosphate site.

Belongs to the aspartate/ornithine carbamoyltransferase superfamily. ATCase family. Heterododecamer (2C3:3R2) of six catalytic PyrB chains organized as two trimers (C3), and six regulatory PyrI chains organized as three dimers (R2).

The catalysed reaction is carbamoyl phosphate + L-aspartate = N-carbamoyl-L-aspartate + phosphate + H(+). It functions in the pathway pyrimidine metabolism; UMP biosynthesis via de novo pathway; (S)-dihydroorotate from bicarbonate: step 2/3. Functionally, catalyzes the condensation of carbamoyl phosphate and aspartate to form carbamoyl aspartate and inorganic phosphate, the committed step in the de novo pyrimidine nucleotide biosynthesis pathway. The sequence is that of Aspartate carbamoyltransferase catalytic subunit from Pseudomonas aeruginosa (strain LESB58).